The following is a 39-amino-acid chain: Photosystem II reaction center protein J (39 aa).

Residues 7–27 form a helical membrane-spanning segment; it reads IPLWVVAVIAGLGVIAVVGLF.

Belongs to the PsbJ family. As to quaternary structure, PSII is composed of 1 copy each of membrane proteins PsbA, PsbB, PsbC, PsbD, PsbE, PsbF, PsbH, PsbI, PsbJ, PsbK, PsbL, PsbM, PsbT, PsbX, PsbY, PsbZ, Psb30/Ycf12, peripheral proteins PsbO, CyanoQ (PsbQ), PsbU, PsbV and a large number of cofactors. It forms dimeric complexes.

Its subcellular location is the cellular thylakoid membrane. Its function is as follows. One of the components of the core complex of photosystem II (PSII). PSII is a light-driven water:plastoquinone oxidoreductase that uses light energy to abstract electrons from H(2)O, generating O(2) and a proton gradient subsequently used for ATP formation. It consists of a core antenna complex that captures photons, and an electron transfer chain that converts photonic excitation into a charge separation. This Gloeothece citriformis (strain PCC 7424) (Cyanothece sp. (strain PCC 7424)) protein is Photosystem II reaction center protein J.